A 363-amino-acid polypeptide reads, in one-letter code: Putative glutamate--cysteine ligase 2 (363 aa).

This sequence belongs to the glutamate--cysteine ligase type 2 family. YbdK subfamily.

It catalyses the reaction L-cysteine + L-glutamate + ATP = gamma-L-glutamyl-L-cysteine + ADP + phosphate + H(+). Its function is as follows. ATP-dependent carboxylate-amine ligase which exhibits weak glutamate--cysteine ligase activity. The chain is Putative glutamate--cysteine ligase 2 from Streptomyces coelicolor (strain ATCC BAA-471 / A3(2) / M145).